Consider the following 88-residue polypeptide: Small ribosomal subunit protein bS20 (88 aa).

Residues Met1 to Ser26 form a disordered region. Residues Ala7–Gln19 are compositionally biased toward basic residues.

It belongs to the bacterial ribosomal protein bS20 family.

Binds directly to 16S ribosomal RNA. This chain is Small ribosomal subunit protein bS20, found in Psychrobacter arcticus (strain DSM 17307 / VKM B-2377 / 273-4).